Consider the following 431-residue polypeptide: Galactose-3-O-sulfotransferase 3 (431 aa).

Residues 1-19 (MPPILQRLQQATKMMSRRK) are Cytoplasmic-facing. A helical; Signal-anchor for type II membrane protein membrane pass occupies residues 20-40 (ILLLVLGCSTVSLLIHQGAQL). The Lumenal portion of the chain corresponds to 41 to 431 (SWYPKLFPLS…RVLPRGPQGP (391 aa)). 4 N-linked (GlcNAc...) asparagine glycosylation sites follow: N91, N110, N177, and N302. Residues 399–431 (QKRRGGARARPEPVLDNPPPRPIRVLPRGPQGP) are disordered.

Belongs to the galactose-3-O-sulfotransferase family. The cofactor is Mg(2+). As to expression, highly expressed in thyroid, brain, kidney, heart and spinal cord.

It is found in the golgi apparatus. The protein resides in the golgi stack membrane. Its pathway is protein modification; carbohydrate sulfation. Functionally, transfers a sulfate to position 3 of non-reducing beta-galactosyl residues in N-glycans and core2-branched O-glycans. Has high activity towards Gal-beta-1,4-GlcNAc, Gal-beta-1,4(Fuc-alpha-1,3)GlcNAc and lower activity towards Gal-beta-1,3(Fuc-alpha-1,4)GlcNAc. In Homo sapiens (Human), this protein is Galactose-3-O-sulfotransferase 3 (GAL3ST3).